The primary structure comprises 295 residues: Ventral anterior homeobox 1a (295 aa).

Over residues 20–33 (ISKPKDNKEIRETQ) the composition is skewed to basic and acidic residues. Residues 20–63 (ISKPKDNKEIRETQAKMPSTYLKEQPGTYPAPGSSELCAKNKSS) are disordered. A DNA-binding region (homeobox) is located at residues 97 to 156 (PKRSRTSFTAEQLYRLEMEFQRCQYVVGRERTDLSRQLNLSETQVKVWFQNRRTKQKKDQ). The segment at 203 to 226 (RAPNSSGPGTRSLATVTSTPPHQP) is disordered. Over residues 204 to 222 (APNSSGPGTRSLATVTSTP) the composition is skewed to polar residues.

This sequence belongs to the EMX homeobox family.

The protein localises to the nucleus. May play a role in the specification and maintenance of basal forebrain identity. The protein is Ventral anterior homeobox 1a (vax1-a) of Xenopus laevis (African clawed frog).